A 485-amino-acid polypeptide reads, in one-letter code: Aspartyl/glutamyl-tRNA(Asn/Gln) amidotransferase subunit B (485 aa).

This sequence belongs to the GatB/GatE family. GatB subfamily. In terms of assembly, heterotrimer of A, B and C subunits.

It carries out the reaction L-glutamyl-tRNA(Gln) + L-glutamine + ATP + H2O = L-glutaminyl-tRNA(Gln) + L-glutamate + ADP + phosphate + H(+). The catalysed reaction is L-aspartyl-tRNA(Asn) + L-glutamine + ATP + H2O = L-asparaginyl-tRNA(Asn) + L-glutamate + ADP + phosphate + 2 H(+). Its function is as follows. Allows the formation of correctly charged Asn-tRNA(Asn) or Gln-tRNA(Gln) through the transamidation of misacylated Asp-tRNA(Asn) or Glu-tRNA(Gln) in organisms which lack either or both of asparaginyl-tRNA or glutaminyl-tRNA synthetases. The reaction takes place in the presence of glutamine and ATP through an activated phospho-Asp-tRNA(Asn) or phospho-Glu-tRNA(Gln). In Cupriavidus taiwanensis (strain DSM 17343 / BCRC 17206 / CCUG 44338 / CIP 107171 / LMG 19424 / R1) (Ralstonia taiwanensis (strain LMG 19424)), this protein is Aspartyl/glutamyl-tRNA(Asn/Gln) amidotransferase subunit B.